Here is a 720-residue protein sequence, read N- to C-terminus: Translation initiation factor IF-2 (720 aa).

Positions 48–138 (KKFKASQAKD…NEVEETKEMP (91 aa)) are disordered. Low complexity-rich tracts occupy residues 60–75 (KQNTQNNHQKSNNKQN) and 99–113 (KGKQQNKNNKTNKNQ). Positions 114–123 (KNNKNKKNNK) are enriched in basic residues. A tr-type G domain is found at 222 to 391 (ERPAVVTIMG…GLVAEVQELK (170 aa)). Residues 231–238 (GHVDHGKT) form a G1 region. Residue 231–238 (GHVDHGKT) participates in GTP binding. The segment at 256–260 (GITQH) is G2. The interval 277 to 280 (DTPG) is G3. GTP is bound by residues 277–281 (DTPGH) and 331–334 (NKID). Positions 331–334 (NKID) are G4. Residues 367–369 (SAL) are G5.

This sequence belongs to the TRAFAC class translation factor GTPase superfamily. Classic translation factor GTPase family. IF-2 subfamily.

The protein resides in the cytoplasm. Its function is as follows. One of the essential components for the initiation of protein synthesis. Protects formylmethionyl-tRNA from spontaneous hydrolysis and promotes its binding to the 30S ribosomal subunits. Also involved in the hydrolysis of GTP during the formation of the 70S ribosomal complex. The polypeptide is Translation initiation factor IF-2 (Staphylococcus epidermidis (strain ATCC 35984 / DSM 28319 / BCRC 17069 / CCUG 31568 / BM 3577 / RP62A)).